Here is a 96-residue protein sequence, read N- to C-terminus: Large ribosomal subunit protein bL27 (96 aa).

Residues 1 to 9 constitute a propeptide that is removed on maturation; it reads MLRLDLQFF.

Belongs to the bacterial ribosomal protein bL27 family. Post-translationally, the N-terminus is cleaved by ribosomal processing cysteine protease Prp.

This is Large ribosomal subunit protein bL27 from Geobacillus sp. (strain WCH70).